The following is a 1014-amino-acid chain: MATEGTTGSGSRVVAGMVCSLWLLVLGSSVLALEEVLLDTTGETSEIGWLTYPPGGWDEVSVLDDQRRLTRTFEACHVAGLPPGSGQDNWLQTHFVERRGAQRAHIRLHFSVRACSSLGVSGGTCRETFTLYYRQADEPDGPDSIAAWHLKRWTKVDTIAADESFPASSSSSSWAVGPHRTGQRVGLQLNVKERSFGPLTQRGFYVAFQDTGACLALVAVKLFSYTCPSVLRAFASFPETQASGAGGASLVAAVGTCVAHAEPEEDGVGGQAGGSPPRLHCNGEGRWMVAVGGCRCQPGHQPARGDKLCQACPEGSYKALAGNVPCSPCPARSHSPDPAAPVCPCLQGFYRASSDPPEAPCTGPPSAPRELWFEVQGSALMLHWRLPQELGGRGDLLFNVVCKECGGHGEPSSGGMCRRCRDEVHFDPRQRGLTESRVLVGGLRAHVPYILEVQAVNGVSELSPDPPQAAAINVSTSHEVPSAVPVMHQVSRAANSITVSWPQPEQTNGNILDYQLRYYDQAEDESHSFTMTSETNTATVTRLSPGHIYGFQVRARTAAGHGPYGGKVYFQTLPQGELSSQLPEKLSLVIGSILGALAFLLLAAITVLAVIFQRKRRGTGYTEQLQQYSSPGLGVKYYIDPSTYDDPCQAIRELAREVDPTYIKIEEVIGAGSFGEVRRGRLQPRGRREQAVAIQALWAGGAESLKMTFLGRAALLGQFQHPNILRLEGVVTKSRPVMVLTELMELGPLDSFLRQREGQFSSLQLVAMQRGVAAAMQYLSSFAFVHRALSARSVLVNSHLVCKVARLGHSPQGSSSLLRWAAPEVITHGKYTTSSDVWSFGILMWEVMSYGERPYWDMNEQEVLNAIEQEFRLPPPPGCPPGLHLLMLDTWQKDRARRPHFDQLVAAFDKMIRKPDTLQAEGGSGDRPSQALLNPVALDFPCLDSPQAWLSAIGLECYQDNFSKFGLSTFSDVAQLSLEDLPGLGITLAGHQKKLLHNIQLLQQHLRQPGSVEV.

An N-terminal signal peptide occupies residues 1-32 (MATEGTTGSGSRVVAGMVCSLWLLVLGSSVLA). Topologically, residues 33 to 591 (LEEVLLDTTG…LPEKLSLVIG (559 aa)) are extracellular. The region spanning 34 to 232 (EEVLLDTTGE…FSYTCPSVLR (199 aa)) is the Eph LBD domain. 2 consecutive Fibronectin type-III domains span residues 364–479 (PPSA…TSHE) and 480–575 (VPSA…TLPQ). A glycan (N-linked (GlcNAc...) asparagine) is linked at asparagine 473. Residues 592 to 612 (SILGALAFLLLAAITVLAVIF) traverse the membrane as a helical segment. Residues 613–1014 (QRKRRGTGYT…HLRQPGSVEV (402 aa)) are Cytoplasmic-facing. The Protein kinase domain maps to 663–912 (IKIEEVIGAG…QLVAAFDKMI (250 aa)). 669–677 (IGAGSFGEV) contacts ATP. Residues 941-1005 (PCLDSPQAWL…LHNIQLLQQH (65 aa)) enclose the SAM domain. Residues 1012–1014 (VEV) carry the PDZ-binding motif.

This sequence belongs to the protein kinase superfamily. Tyr protein kinase family. Ephrin receptor subfamily. As to quaternary structure, interacts with CBL and EPHB1. Interacts with FYN; this interaction takes place in a ligand-independent manner. Post-translationally, ligand-binding increases phosphorylation on tyrosine residues. Phosphorylation on tyrosine residues is mediated by transphosphorylation by the catalytically active EPHB1 in a ligand-independent manner. Tyrosine phosphorylation of the receptor may act as a switch on the functional transition from cell adhesion/attraction to de-adhesion/repulsion. High level in thymus, and brain. Very low levels of expression in kidney, lung, liver, bone marrow, skeletal muscle, spleen from 2 week old and adult mice, heart, testes and embryonic stem cells.

It is found in the cell membrane. The protein localises to the secreted. Functionally, kinase-defective receptor for members of the ephrin-B family. Binds to ephrin-B1 and ephrin-B2. Modulates cell adhesion and migration by exerting both positive and negative effects upon stimulation with ephrin-B2. Inhibits JNK activation, T-cell receptor-induced IL-2 secretion and CD25 expression upon stimulation with ephrin-B2. The protein is Ephrin type-B receptor 6 (Ephb6) of Mus musculus (Mouse).